A 99-amino-acid chain; its full sequence is Large ribosomal subunit protein eL36A (99 aa).

This sequence belongs to the eukaryotic ribosomal protein eL36 family. Component of the large ribosomal subunit (LSU). Mature yeast ribosomes consist of a small (40S) and a large (60S) subunit. The 40S small subunit contains 1 molecule of ribosomal RNA (18S rRNA) and at least 33 different proteins. The large 60S subunit contains 3 rRNA molecules (25S, 5.8S and 5S rRNA) and at least 46 different proteins.

It localises to the cytoplasm. Component of the ribosome, a large ribonucleoprotein complex responsible for the synthesis of proteins in the cell. The small ribosomal subunit (SSU) binds messenger RNAs (mRNAs) and translates the encoded message by selecting cognate aminoacyl-transfer RNA (tRNA) molecules. The large subunit (LSU) contains the ribosomal catalytic site termed the peptidyl transferase center (PTC), which catalyzes the formation of peptide bonds, thereby polymerizing the amino acids delivered by tRNAs into a polypeptide chain. The nascent polypeptides leave the ribosome through a tunnel in the LSU and interact with protein factors that function in enzymatic processing, targeting, and the membrane insertion of nascent chains at the exit of the ribosomal tunnel. The polypeptide is Large ribosomal subunit protein eL36A (rpl3601) (Schizosaccharomyces pombe (strain 972 / ATCC 24843) (Fission yeast)).